We begin with the raw amino-acid sequence, 233 residues long: Glucosamine-6-phosphate deaminase (233 aa).

Aspartate 62 serves as the catalytic Proton acceptor; for enolization step. Asparagine 128 functions as the For ring-opening step in the catalytic mechanism. Histidine 130 acts as the Proton acceptor; for ring-opening step in catalysis. Glutamate 135 (for ring-opening step) is an active-site residue.

This sequence belongs to the glucosamine/galactosamine-6-phosphate isomerase family. NagB subfamily.

It catalyses the reaction alpha-D-glucosamine 6-phosphate + H2O = beta-D-fructose 6-phosphate + NH4(+). The protein operates within amino-sugar metabolism; N-acetylneuraminate degradation; D-fructose 6-phosphate from N-acetylneuraminate: step 5/5. Its function is as follows. Catalyzes the reversible isomerization-deamination of glucosamine 6-phosphate (GlcN6P) to form fructose 6-phosphate (Fru6P) and ammonium ion. The protein is Glucosamine-6-phosphate deaminase of Enterococcus faecalis (strain ATCC 700802 / V583).